We begin with the raw amino-acid sequence, 186 residues long: Hydra actinoporin-like toxin 1 (186 aa).

Residues 1–18 (MLLYICLVNLLLPLSVGA) form the signal peptide. The interval 29–48 (KVGVDAALQQIDDVWKGKTV) is N-terminal region. Residues 158–160 (RAG) carry the Cell attachment site, crucial for protein stability motif.

Belongs to the actinoporin family. HALT subfamily. Octamer or nonamer in membranes. Monomer in the soluble state. In vitro, interacts with folate receptor alpha (of target organism). In terms of tissue distribution, expressed female germline during oogenesis.

It localises to the nematocyst. Its subcellular location is the secreted. It is found in the target cell membrane. Its function is as follows. Pore-forming protein that forms hydrophilic pores and causes cytolysis. Compared to equinatoxin-2 (AC P61914), it reveals lower cytolysis activity (5-12-fold difference, tested on erythrocytes), a larger pore size (probably 2-3 nm) and different affinity to membrane lipids (100-fold lower affinity to sphingomyelin). Binds to sulfatides (SFT) as well as to the two sphingolipids, lysophosphatidic acid (LPA) and sphingosine-1-phosphate (S1P). It seems to bind more strongly to LPA than to S1P and SFT. Shows cytolytic activity on HeLa cells, with a different potency than its paralogs (from most potent to less potent: HALT-4&gt;HALT-6~HALT-1&gt;HALT-3&gt;HALT-7&gt;HALT-2). Pore formation is a multi-step process that involves specific recognition of membrane lipid by a protein aromatic residues rich region, firm binding to the membrane (mainly driven by hydrophobic interactions) accompanied by the transfer of the N-terminal region to the lipid-water interface and finally pore formation after oligomerization of monomers. In vitro, binds to the folate receptor alpha (FOLR1), a GPI-anchored membrane protein that plays a major role in the uptake of folate/folic acid into cells via endocytosis, suggesting a possible involvement of this receptor in the mechanism of HALT-1-induced cell lysis. In vivo, does not cause visible paralysis in larvae of the blowfly Sarcophaga faculata, the most common arthropod prey of Hydra. In Hydra vulgaris (Hydra), this protein is Hydra actinoporin-like toxin 1.